We begin with the raw amino-acid sequence, 354 residues long: Guanine nucleotide-binding protein G(o) subunit alpha (354 aa).

Glycine 2 carries N-myristoyl glycine lipidation. Cysteine 3 is lipidated: S-palmitoyl cysteine. Residues 32–354 enclose the G-alpha domain; sequence KDVKLLLLGA…ANNLRGCGLY (323 aa). Residues 35–48 are G1 motif; the sequence is KLLLLGAGESGKST. Residues glutamate 43, lysine 46, serine 47, threonine 48, serine 152, leucine 176, arginine 177, threonine 178, and arginine 179 each contribute to the GTP site. Mg(2+) is bound at residue serine 47. Residues 174-182 form a G2 motif region; it reads DILRTRVKT. Threonine 182 provides a ligand contact to Mg(2+). Residues 197–206 are G3 motif; that stretch reads FRLFDVGGQR. A 5-glutamyl histamine modification is found at glutamine 205. The interval 266–273 is G4 motif; that stretch reads ILFLNKKD. The GTP site is built by asparagine 270, aspartate 273, and cysteine 325. Residues 324–329 are G5 motif; it reads TCATDT. Cysteine 351 is lipidated: S-palmitoyl cysteine.

It belongs to the G-alpha family. G(i/o/t/z) subfamily. G proteins are composed of 3 units; alpha, beta and gamma. The alpha chain contains the guanine nucleotide binding site. Forms a complex with GNB1 and GNG3. Interacts with RGS14. Interacts with RGS16. Interacts with RGS19. Interacts (when palmitoylated) with ADGRG3. Post-translationally, histaminylated at Gln-205 residues by TGM2.

The protein resides in the cell membrane. The protein localises to the membrane. The catalysed reaction is GTP + H2O = GDP + phosphate + H(+). The GTPase activity is promoted by GTPAse activators, such as RGS14, RGS16 and RGS19. Functionally, guanine nucleotide-binding proteins (G proteins) function as transducers downstream of G protein-coupled receptors (GPCRs) in numerous signaling cascades. The alpha chain contains the guanine nucleotide binding site and alternates between an active, GTP-bound state and an inactive, GDP-bound state. Signaling by an activated GPCR promotes GDP release and GTP binding. The alpha subunit has a low GTPase activity that converts bound GTP to GDP, thereby terminating the signal. Both GDP release and GTP hydrolysis are modulated by numerous regulatory proteins. Signaling is mediated via effector proteins, such as adenylate cyclase. Inhibits adenylate cyclase activity, leading to decreased intracellular cAMP levels. The protein is Guanine nucleotide-binding protein G(o) subunit alpha (Gnao1) of Mus musculus (Mouse).